A 207-amino-acid polypeptide reads, in one-letter code: dTTP/UTP pyrophosphatase (207 aa).

Asp79 serves as the catalytic Proton acceptor.

This sequence belongs to the Maf family. YhdE subfamily. It depends on a divalent metal cation as a cofactor.

The protein resides in the cytoplasm. The catalysed reaction is dTTP + H2O = dTMP + diphosphate + H(+). It catalyses the reaction UTP + H2O = UMP + diphosphate + H(+). Nucleoside triphosphate pyrophosphatase that hydrolyzes dTTP and UTP. May have a dual role in cell division arrest and in preventing the incorporation of modified nucleotides into cellular nucleic acids. This is dTTP/UTP pyrophosphatase from Nitrobacter winogradskyi (strain ATCC 25391 / DSM 10237 / CIP 104748 / NCIMB 11846 / Nb-255).